The primary structure comprises 427 residues: Glutamate-1-semialdehyde 2,1-aminomutase (427 aa).

At Lys-265 the chain carries N6-(pyridoxal phosphate)lysine.

This sequence belongs to the class-III pyridoxal-phosphate-dependent aminotransferase family. HemL subfamily. Homodimer. Requires pyridoxal 5'-phosphate as cofactor.

The protein localises to the cytoplasm. The catalysed reaction is (S)-4-amino-5-oxopentanoate = 5-aminolevulinate. It functions in the pathway porphyrin-containing compound metabolism; protoporphyrin-IX biosynthesis; 5-aminolevulinate from L-glutamyl-tRNA(Glu): step 2/2. The chain is Glutamate-1-semialdehyde 2,1-aminomutase from Burkholderia cenocepacia (strain ATCC BAA-245 / DSM 16553 / LMG 16656 / NCTC 13227 / J2315 / CF5610) (Burkholderia cepacia (strain J2315)).